Reading from the N-terminus, the 228-residue chain is Protein LIAT1 (228 aa).

Residues 1-108 (MAGRGGTGAA…RAEPRDKEEN (108 aa)) are disordered. Over residues 12–24 (YGEEGEEEEEEEA) the composition is skewed to acidic residues. Positions 49–71 (KRKVKKKKKKKKTKGSGKGDADK) are lysine-rich domain. Residues 50-63 (RKVKKKKKKKKTKG) show a composition bias toward basic residues. Basic and acidic residues predominate over residues 90–108 (LNPHKDHGLRAEPRDKEEN). The interaction with ATE1 stretch occupies residues 113–165 (PYSYSINHPCFAEIEDTLSSQINESLRWDGILTDPEAEKERIRIYKLNRRKRY). Repeat 1 spans residues 169 to 178 (ALKCFHSDPC).

Self-associates (via Lys-rich domain); targets LIAT1 to the nucleolus. Interacts with ATE1; it is not a substrate of ATE1, the interaction takes place in the cytoplasm and seems to increase ATE1 arginyltransferase activity. Interacts with JMJD6 and MRPS14. Post-translationally, post-translationally modified by JMJD6 lysyl-hydroxylase activity at its Lys-rich domain, which inhibits its self-association and nucleolar localization. As to expression, highly expressed in spleen, thymus, liver and brown adipose tissue. Moderately expressed in liver, testis and lung.

It localises to the nucleus. It is found in the nucleolus. The protein resides in the cytoplasm. In terms of biological role, participates in nucleolar liquid-liquid phase separation (LLPS) through its N-terminal intrinsically disordered region (IDR). May be involved in ATE1-mediated N-terminal arginylation. The protein is Protein LIAT1 of Mus musculus (Mouse).